Here is a 125-residue protein sequence, read N- to C-terminus: uncharacterized protein (125 aa).

This is an uncharacterized protein from Acanthamoeba polyphaga (Amoeba).